The sequence spans 170 residues: MTIKAEDLPYRPCAGIMVLNAQGLVWAGRRIKEGNSEYDGSPQLWQMPQGGIDDGERPLTAAIRELYEETGMKTVTLLAEASDWIHYDLPPELIGIGLRGKYRGQAQRWFAFRFEGDESEIQIDPPPTGHSAEFDAWDWKPMESLPELIVPFKRAVYEKVVAEFQHLSGK.

Residues 9–162 enclose the Nudix hydrolase domain; that stretch reads PYRPCAGIMV…KRAVYEKVVA (154 aa). Positions 50 to 71 match the Nudix box motif; it reads GGIDDGERPLTAAIRELYEETG.

This sequence belongs to the Nudix hydrolase family. RppH subfamily. It depends on a divalent metal cation as a cofactor.

Accelerates the degradation of transcripts by removing pyrophosphate from the 5'-end of triphosphorylated RNA, leading to a more labile monophosphorylated state that can stimulate subsequent ribonuclease cleavage. This is RNA pyrophosphohydrolase from Agrobacterium fabrum (strain C58 / ATCC 33970) (Agrobacterium tumefaciens (strain C58)).